The following is a 263-amino-acid chain: Flagellar brake protein YcgR (263 aa).

A disordered region spans residues 1 to 21 (MAELSTPSPASPAPLDGGRGD). The PilZ domain maps to 133–250 (QRREFYRLQV…DTRIQRYIFK (118 aa)).

It belongs to the YcgR family. Monomer. Interacts with the flagellar basal bodies.

The protein resides in the bacterial flagellum basal body. Its function is as follows. Acts as a flagellar brake, regulating swimming and swarming in a bis-(3'-5') cyclic diguanylic acid (c-di-GMP)-dependent manner. Binds 1 c-di-GMP dimer per subunit. Increasing levels of c-di-GMP lead to decreased motility. The sequence is that of Flagellar brake protein YcgR from Thauera aminoaromatica.